A 364-amino-acid chain; its full sequence is MWIKELQLRNFRNYGTVDTEFSPGLNVFIGNNAQGKTNFLEAIYFLALTRSHRTRTDKELIQFSKNNLQLIGKLNRISGALSLELQLSDKGRITKINALKQARLSDYIGTMMVVLFAPEDLQLIKGAPSLRRKFIDIDLGQIKPIYLSDLSNYNYVLKQRNTYLKTISTINSDFLSVLDEQLADYGSKVIKHRIDFIGELTREANKHHEAISNGLESLIITYESSVTQQDHQTIKEAFLLNLQKNRQRDIFKKNTSIGPHRDDIHFFINDMNANFASQGQHRSLILSLKMAEVSLMKEMTGDNPILLLDDVMSELDNTRQIKLLETVINENVQTFITTTSLDHLLHLPDKIKTFHVNQGTLKAD.

30–37 (GNNAQGKT) lines the ATP pocket.

Belongs to the RecF family.

Its subcellular location is the cytoplasm. In terms of biological role, the RecF protein is involved in DNA metabolism; it is required for DNA replication and normal SOS inducibility. RecF binds preferentially to single-stranded, linear DNA. It also seems to bind ATP. The protein is DNA replication and repair protein RecF of Streptococcus uberis (strain ATCC BAA-854 / 0140J).